The sequence spans 115 residues: ER exit protein (115 aa).

The protein belongs to the STEEP1 family.

May stimulate membrane curvature formation and subsequent endoplasmic reticulum exit site (ERES) establishment. This Schizosaccharomyces pombe (strain 972 / ATCC 24843) (Fission yeast) protein is ER exit protein.